Reading from the N-terminus, the 96-residue chain is SPbeta prophage-derived uncharacterized protein YosV (96 aa).

The protein is SPbeta prophage-derived uncharacterized protein YosV (yosV) of Bacillus subtilis (strain 168).